Reading from the N-terminus, the 499-residue chain is Cytochrome P450 monooxygenase ausI (499 aa).

The chain crosses the membrane as a helical span at residues 10–30 (PLGQPLIAGFVVVSAVLYLLY). A heme-binding site is contributed by cysteine 439. Asparagine 483 is a glycosylation site (N-linked (GlcNAc...) asparagine).

Belongs to the cytochrome P450 family. The cofactor is heme.

The protein resides in the membrane. It functions in the pathway secondary metabolite biosynthesis; terpenoid biosynthesis. In terms of biological role, cytochrome P450 monooxygenase; part of the gene cluster B that mediates the biosynthesis of austinol and dehydroaustinol, two fungal meroterpenoids. The first step of the pathway is the synthesis of 3,5-dimethylorsellinic acid by the polyketide synthase ausA. 3,5-dimethylorsellinic acid is then prenylated by the polyprenyl transferase ausN. Further epoxidation by the FAD-dependent monooxygenase ausM and cyclization by the probable terpene cyclase ausL lead to the formation of protoaustinoid A. Protoaustinoid A is then oxidized to spiro-lactone preaustinoid A3 by the combined action of the FAD-binding monooxygenases ausB and ausC, and the dioxygenase ausE. Acid-catalyzed keto-rearrangement and ring contraction of the tetraketide portion of preaustinoid A3 by ausJ lead to the formation of preaustinoid A4. The aldo-keto reductase ausK, with the help of ausH, is involved in the next step by transforming preaustinoid A4 into isoaustinone which is in turn hydroxylated by the P450 monooxygenase ausI to form austinolide. Finally, the cytochrome P450 monooxygenase ausG modifies austinolide to austinol. Austinol can be further modified to dehydroaustinol which forms a diffusible complex with diorcinol that initiates conidiation. Due to genetic rearrangements of the clusters and the subsequent loss of some enzymes, the end products of the Emericella nidulans austinoid biosynthesis clusters are austinol and dehydroaustinol, even if additional enzymes, such as the O-acetyltransferase ausQ and the cytochrome P450 monooxygenase ausR are still functional. This is Cytochrome P450 monooxygenase ausI from Emericella nidulans (strain FGSC A4 / ATCC 38163 / CBS 112.46 / NRRL 194 / M139) (Aspergillus nidulans).